Consider the following 353-residue polypeptide: Jasmonate-induced oxygenase 4 (353 aa).

The Fe2OG dioxygenase domain maps to 202–302; sequence VGASLRTNFY…RVSLAFFYNP (101 aa). Jasmonate is bound at residue arginine 207. Residues asparagine 209 and tyrosine 211 each contribute to the 2-oxoglutarate site. The Fe cation site is built by histidine 226, aspartate 228, and histidine 283. The 2-oxoglutarate site is built by arginine 293 and serine 295. The jasmonate site is built by arginine 332 and arginine 336.

The protein belongs to the iron/ascorbate-dependent oxidoreductase family. The cofactor is L-ascorbate. Requires Fe(2+) as cofactor.

The enzyme catalyses jasmonate + 2-oxoglutarate + O2 = (1R,2R)-12-hydroxyjasmonate + succinate + CO2. 2-oxoglutarate-dependent dioxygenase involved in the oxidation of jasmonate (JA), a stress-induced phytohormone synthesized in response to attack by pathogens and herbivores, which triggers the activation of defense responses via the JA-mediated signaling pathway. Converts JA to 12-hydroxyjasmonate (12OH-JA), an inactive form of JA. Is specific to free JA, and cannot oxidize the bioactive form jasmonoyl-L-isoleucine (JA-Ile) or other JA-amino acid conjugates. Prevents over-accumulation of JA and indirectly its bioactive form JA-Ile under stress response. Acts as a negative regulator of JA-mediated defense signaling, by contributing to 12OH-JA accumulation, which represses JA defense responses upon infection by the fungal pathogen Botrytis cinerea. Acts as a negative regulator of JA-mediated defense responses upon infestation by the herbivorous caterpillar Mamestra brassicae. The sequence is that of Jasmonate-induced oxygenase 4 from Arabidopsis thaliana (Mouse-ear cress).